Consider the following 399-residue polypeptide: Phosphoglycerate kinase (399 aa).

Substrate is bound by residues 22–24, arginine 37, 60–63, arginine 119, and arginine 152; these read DLN and HFGR. Residues lysine 202, glutamate 324, and 354–357 each bind ATP; that span reads GGDT.

This sequence belongs to the phosphoglycerate kinase family. In terms of assembly, monomer.

Its subcellular location is the cytoplasm. The enzyme catalyses (2R)-3-phosphoglycerate + ATP = (2R)-3-phospho-glyceroyl phosphate + ADP. It functions in the pathway carbohydrate degradation; glycolysis; pyruvate from D-glyceraldehyde 3-phosphate: step 2/5. The protein is Phosphoglycerate kinase of Rhizobium meliloti (strain 1021) (Ensifer meliloti).